The sequence spans 766 residues: MQRAGSSGARGECDISGTGRLRLEQAARLGGRAVHTSPTGGLGARQVAGMSAKERPKGKVIKDSVTLLPCFYFVELPILASSVVSLYFLELTDVFKPVHSGFSCYDRSLSMPYIEPTQEAIPFLMLLSLAFAGPAITIMVGEGILYCCLSKRRNGAGLEPNINAGGCNFNSFLRRAVRFVGVHVVGLCSTALITDIIQLATGYQAPYFLTVCKPMYTSLEGSCKENSYIVEEICSGSDLTVINNGKKSFPSQHATLAAFAAVYVSMYFNSTLTDSSKLLKPLLVFTFIICGIICGLTRITQYKNHPVDVYCGFLIGGGIALYLGLYAVGNFLPSEDSMLQHRDALRSLTDLNQDPSRVLSAKNGSSGDGIAHTEGILNRNHRDASSLTNLKRANADVEIITPRSPMGKESMVTFSNTLPRANTPSVEDPVRRNASIHASMDSARSKQLLTQWKSKNESRKMSLQVMDSEPEGQSPPRSIEMRSSSEPSRVGVNGDHHVPGNQYLKIQPGTVPGCNNSMPAGPRVSIQSRPGSSQLVHIPEETQENISTSPKSSSARAKWLKAAEKTVACNRGNNQPRIMQVIAMSKQQGVLQSSPKNAEGSTVTCTGSIRYKTLTDHEPSGIVRVEAHPENNRPIIQIPSSTEGEGSGSWKWKAPEKSSLRQTYELNDLNRDSESCESLKDSFGSGDRKRKHIDSNEHHHHGITTIRVTPVEGSEIGSETLSVSSSRDSTLRRKGNIILIPERSNSPENTRNIFYKGTSPTRPYKD.

S37 carries the phosphoserine modification. The next 4 helical transmembrane spans lie at 68-88 (LPCFYFVELPILASSVVSLYF), 120-140 (AIPFLMLLSLAFAGPAITIMV), 179-199 (FVGVHVVGLCSTALITDIIQL), and 248-268 (SFPSQHATLAAFAAVYVSMYF). N-linked (GlcNAc...) asparagine glycosylation is present at N269. 2 helical membrane-spanning segments follow: residues 277–297 (KLLKPLLVFTFIICGIICGLT) and 309–329 (VYCGFLIGGGIALYLGLYAVG). S347 is modified (phosphoserine). The N-linked (GlcNAc...) asparagine glycan is linked to N363. S386 carries the post-translational modification Phosphoserine. N-linked (GlcNAc...) asparagine glycosylation occurs at N433. S439 carries the post-translational modification Phosphoserine. Disordered stretches follow at residues 454 to 503 (SKNE…GNQY) and 510 to 529 (TVPGCNNSMPAGPRVSIQSR). N456 is a glycosylation site (N-linked (GlcNAc...) asparagine). Phosphoserine occurs at positions 462 and 474. N-linked (GlcNAc...) asparagine glycosylation is found at N515 and N545. S608 carries the phosphoserine modification. 3 disordered regions span residues 634 to 654 (PIIQIPSSTEGEGSGSWKWKA), 672 to 705 (DSESCESLKDSFGSGDRKRKHIDSNEHHHHGITT), and 741 to 766 (PERSNSPENTRNIFYKGTSPTRPYKD). The span at 688–702 (RKRKHIDSNEHHHHG) shows a compositional bias: basic residues. A compositionally biased stretch (polar residues) spans 743–752 (RSNSPENTRN).

The protein belongs to the PA-phosphatase related phosphoesterase family. O-glycosylated. Probably at Ser-347. In terms of tissue distribution, specifically expressed in neurons (at protein level).

The protein localises to the postsynaptic density membrane. Functionally, postsynaptic density membrane protein that indirectly regulates glutamatergic synaptic transmission through lysophosphatidic acid (LPA)-mediated signaling pathways. Binds lysophosphatidic acid (LPA) and mediates its internalization into cells. Could act as receptor or a transporter of this lipid at the post-synaptic membrane. Modulates lysophosphatidic acid (LPA) activity in neuron axonal outgrowth during development by attenuating phospholipid-induced axon collapse. The protein is Phospholipid phosphatase-related protein type 4 of Rattus norvegicus (Rat).